The following is an 836-amino-acid chain: MIAELLSSALGLLLYLNTLGADFCYDDSRAIKTNQDLLPETPWNHIFFNDFWGTLLTHSGSHKSYRPLCTLSFRLNYLFGGLDPWNYHLVNVLLHSAVTGLFTNLCKALFGSGCWTLIAGLLFASHPIHTEAVSGIVGRADVGSGLFFLLSLLCYMKHCSTRGYSLSSWCWILCAGFWAACSMLWKEQGVTVLAVSAVYDVFVFHKLKMNQIISVVFKEKNVSFFFSVGLLFAWGVILLGARFYWMGNTPPSFSNSDNPAADCEVLLTRTLTFFYLPTKNLWLLFCPDTLSFDWSMDAVPLIKTITDWRNIHTVAFYILLILLAYSSLKGSAIKRDCNGKVFMNGKQNTNGHSCQSDLEHKNAEQNPVIASKLENGVKHHNSHEMQLPSTENIVVLALSLLIVPFVPASNLFFYVGFVIAERVLYIPSMGFCLLVTVGARALYIKAQKNILKNLLFYATAALIVFYGLKTVVRNGDWKNEEMLYRSGIKVNPAKAWGNLGNVLKSQSKIDEAENAYRNALYYRSNMADMLYNLGLLLQENSKFSEALHYYKLAIGSRPTLASGYLNTGIILMNQGRTEEARRTFLKCSEIPDENLKDPNAHKSSVTSCLYNLGKLYHEQGQYEDALIVYKEAIQKMPRQFSPQSLYNMMGEAYMRLNVVSEAEHWYTESLKSKPDHIPAHLTYGKLLTLTGRKNEAERYFLKAIQLDPNKGNCYMHYGQFLLEEGRILEAAEMAKKAAELDSSEFDVVFNAAHMLRQASLNEEAEKFYKLAAGLRQNYPAALMNLGAILHLNGKLEEAEYNYLRALQLKPDDAITQSNLRKLWNIMEKQGLKNSKT.

The helical transmembrane segment at 1-21 (MIAELLSSALGLLLYLNTLGA) threads the bilayer. The Extracellular portion of the chain corresponds to 22 to 77 (DFCYDDSRAIKTNQDLLPETPWNHIFFNDFWGTLLTHSGSHKSYRPLCTLSFRLNY). Residues 78 to 98 (LFGGLDPWNYHLVNVLLHSAV) traverse the membrane as a helical segment. Residues 99 to 107 (TGLFTNLCK) are Cytoplasmic-facing. Residues 108 to 128 (ALFGSGCWTLIAGLLFASHPI) traverse the membrane as a helical segment. The Extracellular segment spans residues 129–132 (HTEA). The helical transmembrane segment at 133–153 (VSGIVGRADVGSGLFFLLSLL) threads the bilayer. The Cytoplasmic portion of the chain corresponds to 154–164 (CYMKHCSTRGY). Residues 165 to 185 (SLSSWCWILCAGFWAACSMLW) form a helical membrane-spanning segment. At 186-188 (KEQ) the chain is on the extracellular side. Residues 189-209 (GVTVLAVSAVYDVFVFHKLKM) traverse the membrane as a helical segment. Topologically, residues 210–220 (NQIISVVFKEK) are cytoplasmic. A helical transmembrane segment spans residues 221–241 (NVSFFFSVGLLFAWGVILLGA). The Extracellular portion of the chain corresponds to 242 to 312 (RFYWMGNTPP…KTITDWRNIH (71 aa)). A helical membrane pass occupies residues 313–333 (TVAFYILLILLAYSSLKGSAI). Over 334-392 (KRDCNGKVFMNGKQNTNGHSCQSDLEHKNAEQNPVIASKLENGVKHHNSHEMQLPSTEN) the chain is Cytoplasmic. The helical transmembrane segment at 393-413 (IVVLALSLLIVPFVPASNLFF) threads the bilayer. Residue Y414 is a topological domain, extracellular. A helical membrane pass occupies residues 415–435 (VGFVIAERVLYIPSMGFCLLV). The Cytoplasmic portion of the chain corresponds to 436–449 (TVGARALYIKAQKN). Residues 450 to 470 (ILKNLLFYATAALIVFYGLKT) traverse the membrane as a helical segment. Residues 471 to 836 (VVRNGDWKNE…EKQGLKNSKT (366 aa)) are Extracellular-facing. TPR repeat units lie at residues 493–526 (AKAWGNLGNVLKSQSKIDEAENAYRNALYYRSNM), 527–560 (ADMLYNLGLLLQENSKFSEALHYYKLAIGSRPTL), 561–594 (ASGYLNTGIILMNQGRTEEARRTFLKCSEIPDEN), 606–639 (TSCLYNLGKLYHEQGQYEDALIVYKEAIQKMPRQ), 643–676 (QSLYNMMGEAYMRLNVVSEAEHWYTESLKSKPDH), 677–710 (IPAHLTYGKLLTLTGRKNEAERYFLKAIQLDPNK), 711–744 (GNCYMHYGQFLLEEGRILEAAEMAKKAAELDSSE), 745–778 (FDVVFNAAHMLRQASLNEEAEKFYKLAAGLRQNY), and 779–812 (PAALMNLGAILHLNGKLEEAEYNYLRALQLKPDD).

It belongs to the TMTC family.

Its subcellular location is the membrane. The protein resides in the endoplasmic reticulum. It catalyses the reaction a di-trans,poly-cis-dolichyl beta-D-mannosyl phosphate + L-seryl-[protein] = 3-O-(alpha-D-mannosyl)-L-seryl-[protein] + a di-trans,poly-cis-dolichyl phosphate + H(+). It carries out the reaction a di-trans,poly-cis-dolichyl beta-D-mannosyl phosphate + L-threonyl-[protein] = 3-O-(alpha-D-mannosyl)-L-threonyl-[protein] + a di-trans,poly-cis-dolichyl phosphate + H(+). Its pathway is protein modification; protein glycosylation. Transfers mannosyl residues to the hydroxyl group of serine or threonine residues. The chain is Protein O-mannosyl-transferase tmtc2 (tmtc2) from Xenopus laevis (African clawed frog).